The following is a 705-amino-acid chain: Mitochondrial division protein 1 (705 aa).

The tract at residues 110-136 (APRDTIPQNKNMITENGEKRSAKSKKQ) is disordered. The span at 125 to 136 (NGEKRSAKSKKQ) shows a compositional bias: basic and acidic residues. Residues 216 to 250 (ITDNLDLLEIQKNLAASEIRELDIKLEKLKMMREL) are a coiled coil. 2 disordered regions span residues 290-310 (SEDE…GETN) and 342-369 (DHEK…VSHR). Over residues 342–351 (DHEKKSDISE) the composition is skewed to basic and acidic residues. WD repeat units lie at residues 395-435 (AHDE…QIAT), 438-476 (GHLA…ADEA), 492-529 (SHVD…CTQT), 547-594 (LRNS…RMLE), 595-632 (GHTD…LSDV), 634-671 (AYEQ…HWFC), and 676-705 (PEQG…TWAI).

The protein belongs to the WD repeat MDV1/CAF4 family.

The protein resides in the mitochondrion outer membrane. Its function is as follows. Involved in mitochondrial fission. Acts as an adapter protein required to form mitochondrial fission complexes. Formation of these complexes is required to promote constriction and fission of the mitochondrial compartment at a late step in mitochondrial division. This chain is Mitochondrial division protein 1 (MDV1), found in Kluyveromyces lactis (strain ATCC 8585 / CBS 2359 / DSM 70799 / NBRC 1267 / NRRL Y-1140 / WM37) (Yeast).